The following is a 364-amino-acid chain: mRNA decay activator protein ZFP36L2-B (364 aa).

The span at 102–111 (SFSENGERSQ) shows a compositional bias: basic and acidic residues. The tract at residues 102 to 129 (SFSENGERSQHLLHLQQQQQQQKAGAQV) is disordered. The span at 113–123 (LLHLQQQQQQQ) shows a compositional bias: low complexity. The RNA-binding motif lies at 133-138 (RYKTEL). 2 consecutive C3H1-type zinc fingers follow at residues 133-161 (RYKT…HGFH) and 171-199 (KYKT…HNAE). Positions 150–191 (YGEKCQFAHGFHELRSLTRHPKYKTELCRTFHTIGFCPYGPR) are RNA-binding. The interval 308 to 350 (SESPVFDAPPSPPDSLSDRDSYLSGSLSSGSLSGSDSPTLDSN) is disordered. The segment covering 329-348 (YLSGSLSSGSLSGSDSPTLD) has biased composition (low complexity).

In terms of processing, phosphorylated. As to expression, remains unlocalized in the egg and early embryo. From stage 21 (late neurula), expressed around the pronephros in the anterior crests, pharyngeal arch, hindbrain, mesodermal tissues around the pronephros and tail-bud. This expression pattern is maintained up to the tadpole stage.

It localises to the nucleus. The protein resides in the cytoplasm. Functionally, zinc-finger RNA-binding protein that destabilizes several cytoplasmic AU-rich element (ARE)-containing mRNA transcripts by promoting their poly(A) tail removal or deadenylation, and hence provide a mechanism for attenuating protein synthesis. Acts as a 3'-untranslated region (UTR) ARE mRNA-binding adapter protein to communicate signaling events to the mRNA decay machinery. Functions by recruiting the CCR4-NOT deadenylase complex and probably other components of the cytoplasmic RNA decay machinery to the bound ARE-containing mRNAs, and hence promotes ARE-mediated mRNA deadenylation and decay processes. Binds to 3'-UTR ARE of numerous mRNAs. Also induces the degradation of ARE-containing mRNAs even in absence of poly(A) tail. Required for tubulogenesis during pronephros development. This Xenopus laevis (African clawed frog) protein is mRNA decay activator protein ZFP36L2-B (zfp36l2-B).